Reading from the N-terminus, the 465-residue chain is Argininosuccinate lyase (465 aa).

It belongs to the lyase 1 family. Argininosuccinate lyase subfamily.

The protein resides in the cytoplasm. The enzyme catalyses 2-(N(omega)-L-arginino)succinate = fumarate + L-arginine. It functions in the pathway amino-acid biosynthesis; L-arginine biosynthesis; L-arginine from L-ornithine and carbamoyl phosphate: step 3/3. The polypeptide is Argininosuccinate lyase (Deinococcus geothermalis (strain DSM 11300 / CIP 105573 / AG-3a)).